The primary structure comprises 366 residues: N-acetyl-6-hydroxytryptophan oxidase ivoB (366 aa).

Residues 1–18 form the signal peptide; sequence MHLLSSLAALAAAITVAF. N-linked (GlcNAc...) asparagine glycosylation is found at Asn28 and Asn81. Cu cation contacts are provided by His87 and His96. Asn114 and Asn121 each carry an N-linked (GlcNAc...) asparagine glycan. His291 lines the Cu cation pocket. Asn319 is a glycosylation site (N-linked (GlcNAc...) asparagine).

It belongs to the tyrosinase family. Requires Cu(2+) as cofactor.

It participates in pigment biosynthesis. With respect to regulation, activity is inhibited by 2,3-dihydroxynaphthalene, phenylhydrazine, diethyl dithiocarbamate and 8-hydroxyquinolene. Its function is as follows. Nonribosomal peptide synthetase; part of the pathway that mediates the biosynthesis of the gray-brown conidiophore pigment. The first step of the pathway is performed by the nonribosomal peptide synthetase ivoA that catalyzes ATP-dependent unidirectional stereoinversion of L-tryptophan to D-tryptophan with complete conversion. While the stereoinversion is catalyzed by the epimerization (E) domain of ivoA, the terminal condensation (C) domain stereoselectively hydrolyzes D-tryptophanyl-S-phosphopantetheine thioester and thus represents a non-canonical C domain function. D-tryptophan is acetylated, probably by an endogenous acetyltransferase. N-acetyltryptophan is further 6-hydroxylated into N-acetyl-6-hydroxytryptophan (AHT) by the cytochrome P450 monooxygenase ivoC. N-acetyl-6-hydroxytryptophan is substrate of the N-acetyl-6-hydroxytryptophan oxidase ivoB to produce the gray-brown conidiophore pigment. This is N-acetyl-6-hydroxytryptophan oxidase ivoB from Emericella nidulans (strain FGSC A4 / ATCC 38163 / CBS 112.46 / NRRL 194 / M139) (Aspergillus nidulans).